The sequence spans 425 residues: Serine--tRNA ligase (425 aa).

Residue 230 to 232 (TSE) participates in L-serine binding. Residues 261 to 263 (RRE) and Val-277 each bind ATP. Glu-284 is a binding site for L-serine. 348-351 (ELTS) serves as a coordination point for ATP. Thr-382 serves as a coordination point for L-serine.

Belongs to the class-II aminoacyl-tRNA synthetase family. Type-1 seryl-tRNA synthetase subfamily. As to quaternary structure, homodimer. The tRNA molecule binds across the dimer.

It localises to the cytoplasm. It catalyses the reaction tRNA(Ser) + L-serine + ATP = L-seryl-tRNA(Ser) + AMP + diphosphate + H(+). The catalysed reaction is tRNA(Sec) + L-serine + ATP = L-seryl-tRNA(Sec) + AMP + diphosphate + H(+). The protein operates within aminoacyl-tRNA biosynthesis; selenocysteinyl-tRNA(Sec) biosynthesis; L-seryl-tRNA(Sec) from L-serine and tRNA(Sec): step 1/1. Catalyzes the attachment of serine to tRNA(Ser). Is also able to aminoacylate tRNA(Sec) with serine, to form the misacylated tRNA L-seryl-tRNA(Sec), which will be further converted into selenocysteinyl-tRNA(Sec). This Streptomyces coelicolor (strain ATCC BAA-471 / A3(2) / M145) protein is Serine--tRNA ligase.